Reading from the N-terminus, the 276-residue chain is Formamidopyrimidine-DNA glycosylase (276 aa).

P2 (schiff-base intermediate with DNA) is an active-site residue. E3 serves as the catalytic Proton donor. Residue K58 is the Proton donor; for beta-elimination activity of the active site. DNA is bound by residues H92, R111, and R154. An FPG-type zinc finger spans residues 239–273 (HAYQRTGDPCERCGTPIQRIVVGQRGTHFCPKCQV). Residue R263 is the Proton donor; for delta-elimination activity of the active site.

This sequence belongs to the FPG family. In terms of assembly, monomer. Zn(2+) is required as a cofactor.

The catalysed reaction is Hydrolysis of DNA containing ring-opened 7-methylguanine residues, releasing 2,6-diamino-4-hydroxy-5-(N-methyl)formamidopyrimidine.. The enzyme catalyses 2'-deoxyribonucleotide-(2'-deoxyribose 5'-phosphate)-2'-deoxyribonucleotide-DNA = a 3'-end 2'-deoxyribonucleotide-(2,3-dehydro-2,3-deoxyribose 5'-phosphate)-DNA + a 5'-end 5'-phospho-2'-deoxyribonucleoside-DNA + H(+). In terms of biological role, involved in base excision repair of DNA damaged by oxidation or by mutagenic agents. Acts as a DNA glycosylase that recognizes and removes damaged bases. Has a preference for oxidized purines, such as 7,8-dihydro-8-oxoguanine (8-oxoG). Has AP (apurinic/apyrimidinic) lyase activity and introduces nicks in the DNA strand. Cleaves the DNA backbone by beta-delta elimination to generate a single-strand break at the site of the removed base with both 3'- and 5'-phosphates. In Ligilactobacillus salivarius (strain UCC118) (Lactobacillus salivarius), this protein is Formamidopyrimidine-DNA glycosylase.